A 297-amino-acid polypeptide reads, in one-letter code: Acetaldehyde dehydrogenase (297 aa).

15–18 (SGSI) provides a ligand contact to NAD(+). The active-site Acyl-thioester intermediate is the Cys130. Residues 162–170 (SAGIATREN) and Asn272 each bind NAD(+).

Belongs to the acetaldehyde dehydrogenase family.

It catalyses the reaction acetaldehyde + NAD(+) + CoA = acetyl-CoA + NADH + H(+). The protein is Acetaldehyde dehydrogenase (mhpF) of Burkholderia thailandensis (strain ATCC 700388 / DSM 13276 / CCUG 48851 / CIP 106301 / E264).